Consider the following 325-residue polypeptide: Olfactory receptor 14L1 (325 aa).

Residues Met1–Ile43 lie on the Extracellular side of the membrane. The chain crosses the membrane as a helical span at residues Val44–Ile64. Topologically, residues Ile65–His72 are cytoplasmic. The chain crosses the membrane as a helical span at residues Leu73–Ser93. Residues Val94 to Leu117 are Extracellular-facing. Residues Gln118–Tyr138 form a helical membrane-spanning segment. At Asp139–Glu151 the chain is on the cytoplasmic side. A helical membrane pass occupies residues Val152–Ile172. At Cys173–Glu214 the chain is on the extracellular side. The helical transmembrane segment at Ile215–Ser235 threads the bilayer. The Cytoplasmic portion of the chain corresponds to Tyr236–Thr255. A helical transmembrane segment spans residues Phe256–Ala276. Over Tyr277–Asp289 the chain is Extracellular. A helical membrane pass occupies residues Val290–Leu310. Topologically, residues Arg311–Pro325 are cytoplasmic.

This sequence belongs to the G-protein coupled receptor 1 family.

It localises to the cell membrane. Its function is as follows. Odorant receptor. This Homo sapiens (Human) protein is Olfactory receptor 14L1.